An 80-amino-acid chain; its full sequence is Exodeoxyribonuclease 7 small subunit (80 aa).

It belongs to the XseB family. Heterooligomer composed of large and small subunits.

It is found in the cytoplasm. It catalyses the reaction Exonucleolytic cleavage in either 5'- to 3'- or 3'- to 5'-direction to yield nucleoside 5'-phosphates.. Bidirectionally degrades single-stranded DNA into large acid-insoluble oligonucleotides, which are then degraded further into small acid-soluble oligonucleotides. The protein is Exodeoxyribonuclease 7 small subunit of Pseudoalteromonas translucida (strain TAC 125).